The chain runs to 304 residues: GTPase Era (304 aa).

Residues 11–179 (YCGFIAIVGR…QKIVRKSLRE (169 aa)) form the Era-type G domain. The G1 stretch occupies residues 19–26 (GRPNVGKS). 19-26 (GRPNVGKS) is a binding site for GTP. Residues 45-49 (QTTRH) are G2. The segment at 66 to 69 (DTPG) is G3. GTP is bound by residues 66 to 70 (DTPGL) and 128 to 131 (NKVD). The segment at 128–131 (NKVD) is G4. The tract at residues 158–160 (ISA) is G5. The 78-residue stretch at 210–287 (TGEELPYSVT…HLELWVKVKA (78 aa)) folds into the KH type-2 domain.

Belongs to the TRAFAC class TrmE-Era-EngA-EngB-Septin-like GTPase superfamily. Era GTPase family. Monomer.

The protein localises to the cytoplasm. It is found in the cell inner membrane. Functionally, an essential GTPase that binds both GDP and GTP, with rapid nucleotide exchange. Plays a role in 16S rRNA processing and 30S ribosomal subunit biogenesis and possibly also in cell cycle regulation and energy metabolism. The polypeptide is GTPase Era (Actinobacillus pleuropneumoniae serotype 3 (strain JL03)).